Reading from the N-terminus, the 270-residue chain is Hydroxyethylthiazole kinase (270 aa).

Methionine 44 contributes to the substrate binding site. 2 residues coordinate ATP: arginine 119 and threonine 165. Residue glycine 192 participates in substrate binding.

The protein belongs to the Thz kinase family. Mg(2+) serves as cofactor.

The enzyme catalyses 5-(2-hydroxyethyl)-4-methylthiazole + ATP = 4-methyl-5-(2-phosphooxyethyl)-thiazole + ADP + H(+). The protein operates within cofactor biosynthesis; thiamine diphosphate biosynthesis; 4-methyl-5-(2-phosphoethyl)-thiazole from 5-(2-hydroxyethyl)-4-methylthiazole: step 1/1. Functionally, catalyzes the phosphorylation of the hydroxyl group of 4-methyl-5-beta-hydroxyethylthiazole (THZ). This chain is Hydroxyethylthiazole kinase, found in Corynebacterium efficiens (strain DSM 44549 / YS-314 / AJ 12310 / JCM 11189 / NBRC 100395).